The primary structure comprises 257 residues: MSGKNRLNIFPTRMALTVMKTKLKGAVTGHSLLKKKSDALTIRFRRILANIVENKQLMGTTMRDASFSLAAAKYAAGEFSNSVIENVSNPTIAVKMTTENVAGVHLPTFEKISEGVVSNSQELTGLSKGGQQINKSRESHIKAVEALIALASLQTAFITLDEVIKITNRRVNAIEYVVKPKLENTISYIITELDESEREEFYRLKKVQGKKKKDLKAKEAQKEENSANKTIMEPASVHKVRSLIDDEPEDAELLYED.

Positions 211-233 are disordered; that stretch reads KKKDLKAKEAQKEENSANKTIME. The span at 216–226 shows a compositional bias: basic and acidic residues; sequence KAKEAQKEENS.

This sequence belongs to the V-ATPase D subunit family. In terms of assembly, V-ATPase is a heteromultimeric enzyme composed of a peripheral catalytic V1 complex (components A to H) attached to an integral membrane V0 proton pore complex (components: a, c, c', c'' and d).

Functionally, subunit of the peripheral V1 complex of vacuolar ATPase. Vacuolar ATPase is responsible for acidifying a variety of intracellular compartments in eukaryotic cells, thus providing most of the energy required for transport processes in the vacuolar system. The chain is V-type proton ATPase subunit D (atp6v1d) from Dictyostelium discoideum (Social amoeba).